Here is a 256-residue protein sequence, read N- to C-terminus: 5-keto-4-deoxy-D-glucarate aldolase (256 aa).

H50 serves as the catalytic Proton acceptor. Q151 lines the substrate pocket. E153 contacts Mg(2+). S178 and D179 together coordinate substrate. Mg(2+) is bound at residue D179.

Belongs to the HpcH/HpaI aldolase family. KDGluc aldolase subfamily. Homohexamer; trimer of dimers. Mg(2+) serves as cofactor.

It catalyses the reaction 5-dehydro-4-deoxy-D-glucarate = 2-hydroxy-3-oxopropanoate + pyruvate. The catalysed reaction is 2-dehydro-3-deoxy-D-glucarate = 2-hydroxy-3-oxopropanoate + pyruvate. It functions in the pathway carbohydrate acid metabolism; galactarate degradation; D-glycerate from galactarate: step 2/3. In terms of biological role, catalyzes the reversible retro-aldol cleavage of both 5-keto-4-deoxy-D-glucarate and 2-keto-3-deoxy-D-glucarate to pyruvate and tartronic semialdehyde. The protein is 5-keto-4-deoxy-D-glucarate aldolase of Salmonella paratyphi A (strain ATCC 9150 / SARB42).